The primary structure comprises 124 residues: Large ribosomal subunit protein bL12 (124 aa).

The protein belongs to the bacterial ribosomal protein bL12 family. Homodimer. Part of the ribosomal stalk of the 50S ribosomal subunit. Forms a multimeric L10(L12)X complex, where L10 forms an elongated spine to which 2 to 4 L12 dimers bind in a sequential fashion. Binds GTP-bound translation factors.

Its function is as follows. Forms part of the ribosomal stalk which helps the ribosome interact with GTP-bound translation factors. Is thus essential for accurate translation. The sequence is that of Large ribosomal subunit protein bL12 from Janthinobacterium sp. (strain Marseille) (Minibacterium massiliensis).